A 339-amino-acid polypeptide reads, in one-letter code: Serine/threonine-protein kinase SAPK2 (339 aa).

Residues 4–260 form the Protein kinase domain; sequence YEVIKDIGSG…IPEIKNHPWF (257 aa). Residues 10 to 18 and Lys33 each bind ATP; that span reads IGSGNFGVA. Asp123 functions as the Proton acceptor in the catalytic mechanism. A C-terminal region spans residues 253–339; that stretch reads EIKNHPWFLK…EDSGDFVCAL (87 aa).

Belongs to the protein kinase superfamily. Ser/Thr protein kinase family. In terms of assembly, interacts with BZIP46. Interacts with ABI5 and PP2C30. Interacts with PP2C51. Post-translationally, phosphorylated. Expressed in leaf blades, leaf sheaths and roots. Expressed in shoots and roots of young seedlings.

Its subcellular location is the cytoplasm. The protein localises to the nucleus. The enzyme catalyses L-seryl-[protein] + ATP = O-phospho-L-seryl-[protein] + ADP + H(+). The catalysed reaction is L-threonyl-[protein] + ATP = O-phospho-L-threonyl-[protein] + ADP + H(+). Its activity is regulated as follows. Activated by phosphorylation in response to hyperosmotic stress within 5 minutes. In terms of biological role, may play a role in signal transduction of hyperosmotic response. Can phosphorylate BZIP46 in vitro. Together with ABI5, PP2C30 and PYL5, is part of an abscisic acid (ABA) signaling unit that modulates seed germination and early seedling growth. This is Serine/threonine-protein kinase SAPK2 (SAPK2) from Oryza sativa subsp. japonica (Rice).